The primary structure comprises 141 residues: Large ribosomal subunit protein uL16 (141 aa).

A disordered region spans residues 1–23 (MLMPKRTKYRKQMKGRNRGKAHR).

The protein belongs to the universal ribosomal protein uL16 family. As to quaternary structure, part of the 50S ribosomal subunit.

Functionally, binds 23S rRNA and is also seen to make contacts with the A and possibly P site tRNAs. This is Large ribosomal subunit protein uL16 from Helicobacter pylori (strain P12).